Here is a 365-residue protein sequence, read N- to C-terminus: Phospho-N-acetylmuramoyl-pentapeptide-transferase (365 aa).

The next 9 helical transmembrane spans lie at 47 to 67 (LLAL…VVPL), 92 to 112 (PTMG…ILAG), 114 to 134 (SPLV…GWLD), 153 to 173 (LCLQ…QQGW), 180 to 200 (ITLP…LAVF), 215 to 235 (LDGL…LWLA), 239 to 259 (PAIA…LLHN), 281 to 301 (AIAI…LFVL), and 344 to 364 (TQVV…CWLL).

The protein belongs to the glycosyltransferase 4 family. MraY subfamily. Mg(2+) serves as cofactor.

The protein resides in the cell inner membrane. It carries out the reaction UDP-N-acetyl-alpha-D-muramoyl-L-alanyl-gamma-D-glutamyl-meso-2,6-diaminopimeloyl-D-alanyl-D-alanine + di-trans,octa-cis-undecaprenyl phosphate = di-trans,octa-cis-undecaprenyl diphospho-N-acetyl-alpha-D-muramoyl-L-alanyl-D-glutamyl-meso-2,6-diaminopimeloyl-D-alanyl-D-alanine + UMP. It functions in the pathway cell wall biogenesis; peptidoglycan biosynthesis. Functionally, catalyzes the initial step of the lipid cycle reactions in the biosynthesis of the cell wall peptidoglycan: transfers peptidoglycan precursor phospho-MurNAc-pentapeptide from UDP-MurNAc-pentapeptide onto the lipid carrier undecaprenyl phosphate, yielding undecaprenyl-pyrophosphoryl-MurNAc-pentapeptide, known as lipid I. This chain is Phospho-N-acetylmuramoyl-pentapeptide-transferase, found in Synechococcus elongatus (strain ATCC 33912 / PCC 7942 / FACHB-805) (Anacystis nidulans R2).